Here is a 251-residue protein sequence, read N- to C-terminus: MEVAFDIRNFSVYYGNKVGIRNVNLEIYRNKVTAIIGPSGCGKSTLLRSLNRLIELVDGVRIEGEVIFDGKNIYDDGVDAVELRRRIGMVFQHPNPFPKSIFDNVAYGPRVHGIKDKERLKEIVEESLKKAALWDEVKDRLSDSALGLSGGQQQRLCIARAIATNPEVILFDEPTSALDPIAAAKIEELMVELKKNYTVVVVTHNIQQAARISDYVAFFWMGELVEYGKTAKVFEKPEKELTEKYLTGRVG.

One can recognise an ABC transporter domain in the interval 5–246 (FDIRNFSVYY…PEKELTEKYL (242 aa)). An ATP-binding site is contributed by 37–44 (GPSGCGKS).

It belongs to the ABC transporter superfamily. Phosphate importer (TC 3.A.1.7) family. In terms of assembly, the complex is composed of two ATP-binding proteins (PstB), two transmembrane proteins (PstC and PstA) and a solute-binding protein (PstS).

The protein resides in the cell membrane. It carries out the reaction phosphate(out) + ATP + H2O = ADP + 2 phosphate(in) + H(+). Functionally, part of the ABC transporter complex PstSACB involved in phosphate import. Responsible for energy coupling to the transport system. The polypeptide is Phosphate import ATP-binding protein PstB (Archaeoglobus fulgidus (strain ATCC 49558 / DSM 4304 / JCM 9628 / NBRC 100126 / VC-16)).